We begin with the raw amino-acid sequence, 836 residues long: V-type proton ATPase subunit C (836 aa).

Basic residues predominate over residues 116–144 (LSLRHQRKHQHTHHQNKPQHYHHHHHHHQ). Disordered stretches follow at residues 116–169 (LSLR…ASAP), 302–403 (APTT…SVQS), 415–453 (KPKR…QNHN), and 496–544 (PSQL…PLSP). Residues 160–169 (ATPPAPASAP) are compositionally biased toward pro residues. Low complexity predominate over residues 302-316 (APTTSSSVHSSMSRS). Polar residues-rich tracts occupy residues 319–348 (KRLN…HLAT) and 364–374 (TNPLQSPVQKS). Residues 425 to 450 (AQQQHETAQLQHQQTTQQHATPLTPQ) are compositionally biased toward low complexity. A compositionally biased stretch (polar residues) spans 496–511 (PSQLNINNGFNLTPTH). Residues 512 to 529 (RSSPVSSCCGSSSQGRSS) show a composition bias toward low complexity.

The protein belongs to the V-ATPase C subunit family. As to quaternary structure, V-ATPase is a heteromultimeric enzyme made up of two complexes: the ATP-hydrolytic V1 complex and the proton translocation V0 complex. The V1 complex consists of three catalytic AB heterodimers that form a heterohexamer, three peripheral stalks each consisting of EG heterodimers, one central rotor including subunits D and F, and the regulatory subunits C and H. The proton translocation complex V0 consists of the proton transport subunit a, a ring of proteolipid subunits c9c'', rotary subunit d, subunits e and f, and the accessory subunits VhaAC45 and ATP6AP2. As to expression, in larvae, expressed in the ring gland, CNS, imaginal disks and lymph gland.

Subunit of the V1 complex of vacuolar(H+)-ATPase (V-ATPase), a multisubunit enzyme composed of a peripheral complex (V1) that hydrolyzes ATP and a membrane integral complex (V0) that translocates protons. V-ATPase is responsible for acidifying and maintaining the pH of intracellular compartments and in some cell types, is targeted to the plasma membrane, where it is responsible for acidifying the extracellular environment. Subunit C is necessary for the assembly of the catalytic sector of the enzyme and is likely to have a specific function in its catalytic activity. In enterocytes, acts as part of a pHCl-2 sensory pathway which mediates Tor-dependent larval growth and metabolism in response to zinc availability. Likely acts in maintaining enterocyte lysosomal acidification which consequently promotes Tor activation at the lysosome membrane. The chain is V-type proton ATPase subunit C (Vha44) from Drosophila melanogaster (Fruit fly).